The primary structure comprises 212 residues: Imidazole glycerol phosphate synthase subunit HisH (212 aa).

The region spanning 1–211 (MIGVIDYGMG…TKMAAEQQVK (211 aa)) is the Glutamine amidotransferase type-1 domain. Catalysis depends on C79, which acts as the Nucleophile. Active-site residues include H186 and E188.

As to quaternary structure, heterodimer of HisH and HisF.

It is found in the cytoplasm. It catalyses the reaction 5-[(5-phospho-1-deoxy-D-ribulos-1-ylimino)methylamino]-1-(5-phospho-beta-D-ribosyl)imidazole-4-carboxamide + L-glutamine = D-erythro-1-(imidazol-4-yl)glycerol 3-phosphate + 5-amino-1-(5-phospho-beta-D-ribosyl)imidazole-4-carboxamide + L-glutamate + H(+). The enzyme catalyses L-glutamine + H2O = L-glutamate + NH4(+). It participates in amino-acid biosynthesis; L-histidine biosynthesis; L-histidine from 5-phospho-alpha-D-ribose 1-diphosphate: step 5/9. IGPS catalyzes the conversion of PRFAR and glutamine to IGP, AICAR and glutamate. The HisH subunit catalyzes the hydrolysis of glutamine to glutamate and ammonia as part of the synthesis of IGP and AICAR. The resulting ammonia molecule is channeled to the active site of HisF. In Bacillus velezensis (strain DSM 23117 / BGSC 10A6 / LMG 26770 / FZB42) (Bacillus amyloliquefaciens subsp. plantarum), this protein is Imidazole glycerol phosphate synthase subunit HisH.